A 309-amino-acid polypeptide reads, in one-letter code: Taste receptor type 2 member 64 (309 aa).

At 1-3 (MVY) the chain is on the extracellular side. The helical transmembrane segment at 4 to 26 (FLLIILSILVVFAFVLGNFSNGF) threads the bilayer. Over 27 to 46 (VALVNVIDWVKTRKISSADQ) the chain is Cytoplasmic. Residues 47–69 (ILTALVVSRIGLLWVILFHWYAN) traverse the membrane as a helical segment. At 70-83 (VFNSALYSSEVGAV) the chain is on the extracellular side. Residues 84–106 (ASNISAIINHFSIWLAASLGIFY) traverse the membrane as a helical segment. Residues 107 to 126 (LLKIANFSNLIFLHLKKRIR) are Cytoplasmic-facing. The chain crosses the membrane as a helical span at residues 127–149 (SVVLVILLGPLVFLICNLAVITM). The Extracellular segment spans residues 150–176 (DERVWTKEYEGNVTWKIKLRNAIHLSD). N-linked (GlcNAc...) asparagine glycosylation occurs at N161. A helical transmembrane segment spans residues 177 to 199 (LTVSTLANLIPFILTLICFLLLI). Residues 200–230 (CSLHKHLKKMQLHGKGSQDLSTKVHIKALQT) lie on the Cytoplasmic side of the membrane. A helical membrane pass occupies residues 231–253 (VISFLMLYAIYFLYLITLTWNLW). Residues 254 to 258 (TQQNK) are Extracellular-facing. The helical transmembrane segment at 259–281 (LVFLLCQTLGIMYPSFHSFFLIM) threads the bilayer. Residues 282–309 (GSRKLKQTFLSVLCQVTCLVKGQQPSTP) lie on the Cytoplasmic side of the membrane.

The protein belongs to the G-protein coupled receptor T2R family.

It localises to the membrane. Its function is as follows. Receptor that may play a role in the perception of bitterness and is gustducin-linked. May play a role in sensing the chemical composition of the gastrointestinal content. The activity of this receptor may stimulate alpha gustducin, mediate PLC-beta-2 activation and lead to the gating of TRPM5. This Pan paniscus (Pygmy chimpanzee) protein is Taste receptor type 2 member 64 (TAS2R64).